The following is a 152-amino-acid chain: MLYLTQRIETPAAVTATLTLPIDVRVKSRAKVVLGDGREAGLLLPRGLLLRGGDRLSTEDGAEVVEIIAANEAVSVVRCADPFLLAKACYHLGNRHVPLQILPDELRYHHDHVLDDMLRQFSLEVTFAHLPFEPEAGAYASESHGHHHGHAH.

Belongs to the UreE family.

The protein localises to the cytoplasm. Involved in urease metallocenter assembly. Binds nickel. Probably functions as a nickel donor during metallocenter assembly. In Citrobacter koseri (strain ATCC BAA-895 / CDC 4225-83 / SGSC4696), this protein is Urease accessory protein UreE.